We begin with the raw amino-acid sequence, 102 residues long: Large ribosomal subunit protein bL21 (102 aa).

This sequence belongs to the bacterial ribosomal protein bL21 family. Part of the 50S ribosomal subunit. Contacts protein L20.

Functionally, this protein binds to 23S rRNA in the presence of protein L20. This Nitratiruptor sp. (strain SB155-2) protein is Large ribosomal subunit protein bL21.